The sequence spans 150 residues: UPF0506 protein SJCHGC03047 (150 aa).

Positions 1 to 18 (MNTCIQLLILCLVTLTNS) are cleaved as a signal peptide. N-linked (GlcNAc...) asparagine glycans are attached at residues asparagine 20, asparagine 48, and asparagine 110. 3 cysteine pairs are disulfide-bonded: cysteine 116/cysteine 130, cysteine 123/cysteine 134, and cysteine 129/cysteine 139.

This sequence belongs to the UPF0506 family.

The protein resides in the secreted. The chain is UPF0506 protein SJCHGC03047 from Schistosoma japonicum (Blood fluke).